Here is a 641-residue protein sequence, read N- to C-terminus: 1-deoxy-D-xylulose-5-phosphate synthase (641 aa).

Thiamine diphosphate-binding positions include His-79 and 120-122 (AHS). Asp-151 is a Mg(2+) binding site. Residues 152–153 (GA), Asn-180, Tyr-290, and Glu-372 contribute to the thiamine diphosphate site. Asn-180 serves as a coordination point for Mg(2+).

Belongs to the transketolase family. DXPS subfamily. As to quaternary structure, homodimer. It depends on Mg(2+) as a cofactor. Thiamine diphosphate is required as a cofactor.

It catalyses the reaction D-glyceraldehyde 3-phosphate + pyruvate + H(+) = 1-deoxy-D-xylulose 5-phosphate + CO2. Its pathway is metabolic intermediate biosynthesis; 1-deoxy-D-xylulose 5-phosphate biosynthesis; 1-deoxy-D-xylulose 5-phosphate from D-glyceraldehyde 3-phosphate and pyruvate: step 1/1. Its function is as follows. Catalyzes the acyloin condensation reaction between C atoms 2 and 3 of pyruvate and glyceraldehyde 3-phosphate to yield 1-deoxy-D-xylulose-5-phosphate (DXP). The sequence is that of 1-deoxy-D-xylulose-5-phosphate synthase from Bradyrhizobium sp. (strain BTAi1 / ATCC BAA-1182).